Here is a 151-residue protein sequence, read N- to C-terminus: MPHRSRHKKGRSSSVRPPHPTVPTWIQYTPEEVEQLAVELARRGFPPSQIGIILRDQYGIPLVKPITGKKLTKILEEHGIKQELPEDLLNLIRRALRIRKHLEEHPKDMASRRGLQLVESKIHRLIKYYKRVGKIPQDFVYNPEALSHLAT.

Over residues 1–11 (MPHRSRHKKGR) the composition is skewed to basic residues. A disordered region spans residues 1 to 24 (MPHRSRHKKGRSSSVRPPHPTVPT).

It belongs to the universal ribosomal protein uS15 family. Part of the 30S ribosomal subunit.

This chain is Small ribosomal subunit protein uS15, found in Pyrobaculum calidifontis (strain DSM 21063 / JCM 11548 / VA1).